We begin with the raw amino-acid sequence, 1000 residues long: Chromosome transmission fidelity protein 18 homolog (1000 aa).

Disordered regions lie at residues 53–89, 130–159, and 272–301; these read SAGDPIRSNANSKPTGDSNGEALACIDTSKSKKRDAS, AGNSTALSDDITPPPSPNHSPKKNERDSKF, and EFGENDSEILENDDNAGEEDDEDEPSSHSL. Positions 60–70 are enriched in polar residues; that stretch reads SNANSKPTGDS. Over residues 272 to 295 the composition is skewed to acidic residues; it reads EFGENDSEILENDDNAGEEDDEDE. 396 to 403 is an ATP binding site; the sequence is GPPGLGKT. Polar residues predominate over residues 888-898; it reads ARNAGRDNTTA. The segment at 888 to 916 is disordered; the sequence is ARNAGRDNTTAAAAVKTADPKGAKSAAKP.

It belongs to the activator 1 small subunits family. CTF18 subfamily. As to quaternary structure, component of the CTF18-RFC complex, which consists of ctf18, ctf8, dcc1, rfc2, rfc3, rfc4 and rfc5. The CTF18-RFC complex associates with pcna.

It localises to the nucleus. Functionally, chromosome cohesion factor involved in sister chromatid cohesion and fidelity of chromosome transmission. Component of one of the cell nuclear antigen loader complexes, CTF18-replication factor C (CTF18-RFC), which consists of ctf18, ctf8, dcc1, rfc2, rfc3, rfc4 and rfc5. The CTF18-RFC complex binds to single-stranded and primed DNAs and has weak ATPase activity that is stimulated by the presence of primed DNA, replication protein A (RPA) and by proliferating cell nuclear antigen (pcna). The CTF18-RFC complex catalyzes the ATP-dependent loading of pcna onto primed and gapped DNA. The protein is Chromosome transmission fidelity protein 18 homolog (chtf18) of Xenopus laevis (African clawed frog).